The chain runs to 1498 residues: DNA-directed RNA polymerase subunit beta' (1498 aa).

Positions 67, 69, 82, and 85 each coordinate Zn(2+). Mg(2+)-binding residues include Asp-499, Asp-501, and Asp-503. Cys-867, Cys-943, Cys-950, and Cys-953 together coordinate Zn(2+).

Belongs to the RNA polymerase beta' chain family. The RNAP catalytic core consists of 2 alpha, 1 beta, 1 beta' and 1 omega subunit. When a sigma factor is associated with the core the holoenzyme is formed, which can initiate transcription. It depends on Mg(2+) as a cofactor. The cofactor is Zn(2+).

The catalysed reaction is RNA(n) + a ribonucleoside 5'-triphosphate = RNA(n+1) + diphosphate. DNA-dependent RNA polymerase catalyzes the transcription of DNA into RNA using the four ribonucleoside triphosphates as substrates. The polypeptide is DNA-directed RNA polymerase subunit beta' (Chlorobium phaeobacteroides (strain BS1)).